Reading from the N-terminus, the 131-residue chain is UPF0102 protein YraN (131 aa).

It belongs to the UPF0102 family.

The sequence is that of UPF0102 protein YraN from Salmonella typhimurium (strain LT2 / SGSC1412 / ATCC 700720).